A 251-amino-acid polypeptide reads, in one-letter code: uncharacterized protein (251 aa).

The interval 207-251 (ATPHSKRGRTKLYRKEPPGDNRSPPPWQEPHGEGLAEKLSPGPAR) is disordered.

This is an uncharacterized protein from Treponema pallidum (strain Nichols).